The sequence spans 774 residues: Lysyl oxidase homolog 2 (774 aa).

Positions 1–25 are cleaved as a signal peptide; it reads MERPLCSHLCSCLAVLALLSPLSLA. SRCR domains are found at residues 58–159, 188–302, 326–425, and 435–544; these read LRLA…VVCS, IRAI…VSCV, VRLR…VRCN, and LRLN…VACS. 9 disulfide bridges follow: cysteine 84/cysteine 148, cysteine 97/cysteine 158, cysteine 128/cysteine 138, cysteine 218/cysteine 291, cysteine 231/cysteine 301, cysteine 265/cysteine 275, cysteine 351/cysteine 414, cysteine 364/cysteine 424, and cysteine 395/cysteine 405. Asparagine 288 carries an N-linked (GlcNAc...) asparagine glycan. N-linked (GlcNAc...) asparagine glycosylation occurs at asparagine 455. 3 disulfide bridges follow: cysteine 464–cysteine 530, cysteine 477–cysteine 543, and cysteine 511–cysteine 521. Residues 548–751 are lysyl-oxidase like; it reads PDLVLNAEMV…WMYNCHIGGS (204 aa). Ca(2+) contacts are provided by aspartate 549 and leucine 550. 4 disulfides stabilise this stretch: cysteine 573–cysteine 625, cysteine 579–cysteine 695, cysteine 657–cysteine 673, and cysteine 663–cysteine 685. Histidine 626, histidine 628, and histidine 630 together coordinate Cu cation. An N-linked (GlcNAc...) asparagine glycan is attached at asparagine 644. Positions 653 to 689 form a cross-link, lysine tyrosylquinone (Lys-Tyr); it reads KASFCLEDTECEGDIQKNYECANFGDQGITMGCWDMY. A 2',4',5'-topaquinone modification is found at tyrosine 689. 4 residues coordinate Ca(2+): glutamate 722, aspartate 724, asparagine 727, and asparagine 728. Residues cysteine 732 and cysteine 746 are joined by a disulfide bond.

The protein belongs to the lysyl oxidase family. Component of some chromatin repressor complex. Interacts with SNAI1. Interacts with TAF10. Interacts with HSPA5. Interacts with EFEMP2. Cu cation is required as a cofactor. Lysine tyrosylquinone residue serves as cofactor. The lysine tyrosylquinone cross-link (LTQ) is generated by condensation of the epsilon-amino group of a lysine with a topaquinone produced by oxidation of tyrosine. Post-translationally, N-glycosylated. N-glycosylation on Asn-455 and Asn-644 may be essential for proper folding and secretion; may be composed of a fucosylated carbohydrates attached to a trimannose N-linked glycan core.

The protein localises to the secreted. It is found in the extracellular space. It localises to the extracellular matrix. Its subcellular location is the basement membrane. The protein resides in the nucleus. The protein localises to the chromosome. It is found in the endoplasmic reticulum. It carries out the reaction L-lysyl-[protein] + O2 + H2O = (S)-2-amino-6-oxohexanoyl-[protein] + H2O2 + NH4(+). With respect to regulation, specifically inhibited by a mouse monoclonal antibody AB0023, inhibition occurs in a non-competitive manner. Its function is as follows. Mediates the post-translational oxidative deamination of lysine residues on target proteins leading to the formation of deaminated lysine (allysine). Acts as a transcription corepressor and specifically mediates deamination of trimethylated 'Lys-4' of histone H3 (H3K4me3), a specific tag for epigenetic transcriptional activation. Shows no activity against histone H3 when it is trimethylated on 'Lys-9' (H3K9me3) or 'Lys-27' (H3K27me3) or when 'Lys-4' is monomethylated (H3K4me1) or dimethylated (H3K4me2). Also mediates deamination of methylated TAF10, a member of the transcription factor IID (TFIID) complex, which induces release of TAF10 from promoters, leading to inhibition of TFIID-dependent transcription. LOXL2-mediated deamination of TAF10 results in transcriptional repression of genes required for embryonic stem cell pluripotency including POU5F1/OCT4, NANOG, KLF4 and SOX2. Involved in epithelial to mesenchymal transition (EMT) via interaction with SNAI1 and participates in repression of E-cadherin CDH1, probably by mediating deamination of histone H3. During EMT, involved with SNAI1 in negatively regulating pericentromeric heterochromatin transcription. SNAI1 recruits LOXL2 to pericentromeric regions to oxidize histone H3 and repress transcription which leads to release of heterochromatin component CBX5/HP1A, enabling chromatin reorganization and acquisition of mesenchymal traits. Interacts with the endoplasmic reticulum protein HSPA5 which activates the IRE1-XBP1 pathway of the unfolded protein response, leading to expression of several transcription factors involved in EMT and subsequent EMT induction. When secreted into the extracellular matrix, promotes cross-linking of extracellular matrix proteins by mediating oxidative deamination of peptidyl lysine residues in precursors to fibrous collagen and elastin. Acts as a regulator of sprouting angiogenesis, probably via collagen IV scaffolding. Acts as a regulator of chondrocyte differentiation, probably by regulating expression of factors that control chondrocyte differentiation. In Pongo abelii (Sumatran orangutan), this protein is Lysyl oxidase homolog 2 (LOXL2).